Consider the following 562-residue polypeptide: Potassium-transporting ATPase potassium-binding subunit (562 aa).

12 consecutive transmembrane segments (helical) span residues 6–26 (FLLI…LGSF), 63–83 (ALAI…LLMM), 132–152 (GLTV…FALI), 175–195 (LYVL…QGVL), 253–273 (FVQM…FGQV), 283–303 (LIWA…YAEL), 327–347 (FGIL…CGAV), 356–376 (ALGG…FGGV), 379–399 (GLYG…LMIG), 416–436 (MTAL…ALAL), 483–503 (LLLA…VLAI), and 526–546 (LFIG…FIPA).

This sequence belongs to the KdpA family. As to quaternary structure, the system is composed of three essential subunits: KdpA, KdpB and KdpC.

The protein localises to the cell inner membrane. Its function is as follows. Part of the high-affinity ATP-driven potassium transport (or Kdp) system, which catalyzes the hydrolysis of ATP coupled with the electrogenic transport of potassium into the cytoplasm. This subunit binds the periplasmic potassium ions and delivers the ions to the membrane domain of KdpB through an intramembrane tunnel. This chain is Potassium-transporting ATPase potassium-binding subunit, found in Yersinia enterocolitica serotype O:8 / biotype 1B (strain NCTC 13174 / 8081).